The sequence spans 118 residues: Iron-sulfur cluster insertion protein ErpA (118 aa).

Iron-sulfur cluster contacts are provided by cysteine 46, cysteine 110, and cysteine 112.

Belongs to the HesB/IscA family. As to quaternary structure, homodimer. Iron-sulfur cluster is required as a cofactor.

Its function is as follows. Required for insertion of 4Fe-4S clusters for at least IspG. The polypeptide is Iron-sulfur cluster insertion protein ErpA (Psychromonas ingrahamii (strain DSM 17664 / CCUG 51855 / 37)).